A 115-amino-acid polypeptide reads, in one-letter code: Large ribosomal subunit protein bL19 (115 aa).

Belongs to the bacterial ribosomal protein bL19 family. Part of the 50S ribosomal subunit.

In terms of biological role, this protein is located at the 30S-50S ribosomal subunit interface and may play a role in the structure and function of the aminoacyl-tRNA binding site. This Bacillus subtilis (strain 168) protein is Large ribosomal subunit protein bL19 (rplS).